Consider the following 354-residue polypeptide: MTSVLALETSCDESAAALVWRDADGRFEVSSARIASQVEEHARWGGVVPEIASRRHVEALPGLIQQVLDESDSTLAEVDAIAATVTPGLAGALMVASVTGRTLSALRDRPFLAVHHLEGHLASVHLAEHRPQLPYLVLLVSGGHTELIRVEADGAMERLGRSHDDAAGEAFDKVARLLGLGYPGGPAIQAAAEGGDGRRFKLPKGRISLPEGGFHPYDFSFSGLKTAMLRTVEAQSGPLPTADLAASFEQVVVDVLVERSLRCAMDHGLEELVMVGGVAANRRLRQTLEQRSNAVGVRVSVAPLAYCTDNAAMIGAAALLRWDAGARGCSLRTGVSARWPLAQVDQLYTEQPAF.

Positions 116 and 120 each coordinate Fe cation. Substrate-binding positions include 139–143 (LVSGG), Asp172, Gly185, and Asn281. Asp309 is a binding site for Fe cation.

It belongs to the KAE1 / TsaD family. It depends on Fe(2+) as a cofactor.

The protein localises to the cytoplasm. It carries out the reaction L-threonylcarbamoyladenylate + adenosine(37) in tRNA = N(6)-L-threonylcarbamoyladenosine(37) in tRNA + AMP + H(+). Required for the formation of a threonylcarbamoyl group on adenosine at position 37 (t(6)A37) in tRNAs that read codons beginning with adenine. Is involved in the transfer of the threonylcarbamoyl moiety of threonylcarbamoyl-AMP (TC-AMP) to the N6 group of A37, together with TsaE and TsaB. TsaD likely plays a direct catalytic role in this reaction. In Parasynechococcus marenigrum (strain WH8102), this protein is tRNA N6-adenosine threonylcarbamoyltransferase.